The primary structure comprises 77 residues: MSSIEERVNKIIVEQLGVKPEDVKSEASFVEDLGADSLDTVELVMALEEEFETEIPDEEAEKISTVQSAVDYIKAHS.

The Carrier domain maps to S2 to S77. S37 bears the O-(pantetheine 4'-phosphoryl)serine mark.

It belongs to the acyl carrier protein (ACP) family. Post-translationally, 4'-phosphopantetheine is transferred from CoA to a specific serine of apo-ACP by AcpS. This modification is essential for activity because fatty acids are bound in thioester linkage to the sulfhydryl of the prosthetic group.

It localises to the cytoplasm. It participates in lipid metabolism; fatty acid biosynthesis. Functionally, carrier of the growing fatty acid chain in fatty acid biosynthesis. The protein is Acyl carrier protein of Alcanivorax borkumensis (strain ATCC 700651 / DSM 11573 / NCIMB 13689 / SK2).